We begin with the raw amino-acid sequence, 177 residues long: Peptidyl-prolyl cis-trans isomerase H (177 aa).

At Ala-2 the chain carries N-acetylalanine. The 163-residue stretch at 14–176 folds into the PPIase cyclophilin-type domain; sequence FFDVSIGGQE…LPVVISQCGE (163 aa).

Belongs to the cyclophilin-type PPIase family. PPIase H subfamily. Interacts directly with PRPF4. Part of a heteromeric complex containing PPIH, PRPF3 and PRPF4 that is stable in the absence of RNA. Component of the U4/U6-U5 tri-snRNP complex composed of the U4, U6 and U5 snRNAs and at least PRPF3, PRPF4, PRPF6, PRPF8, PRPF31, SNRNP200, TXNL4A, SNRNP40, DDX23, CD2BP2, PPIH, SNU13, EFTUD2, SART1 and USP39. Heterodimer with PRPF18.

The protein localises to the nucleus speckle. Its subcellular location is the cytoplasm. It carries out the reaction [protein]-peptidylproline (omega=180) = [protein]-peptidylproline (omega=0). With respect to regulation, inhibited by cyclosporin A. In terms of biological role, PPIase that catalyzes the cis-trans isomerization of proline imidic peptide bonds in oligopeptides and may therefore assist protein folding. Participates in pre-mRNA splicing. May play a role in the assembly of the U4/U5/U6 tri-snRNP complex, one of the building blocks of the spliceosome. May act as a chaperone. This Homo sapiens (Human) protein is Peptidyl-prolyl cis-trans isomerase H (PPIH).